Here is a 556-residue protein sequence, read N- to C-terminus: MKTDIEIAQEAKMEPIVKIAEKIGLNEDDIDLYGKYKCKISLDVLKQNKNKQDGKLVLVTAINPTPAGEGKSTVTVGLGEALCKMNKNTVIALREPSLGPVFGIKGGAAGGGYAQVVPMEDINLHFTGDMHAITSANNLLCAAIDNHIHQGNSLKIDQRRIVFKRVMDMNDRALRSIVVGLGGKVNGFPREDGFMITVASEIMAILCLANDLMDLKERMGKILIAYDLDGNPVYCRDLKVEGAMAMLMKDAMKPNLVQTLENTPAIIHGGPFANIAHGCNSILATKMALKLGDYVITEAGFGADLGAEKFLDIKCRYGNLNPDCVVLVATIRALKHHGGALKEDLSKPNAKVLEKGLSNLGKQIENIKKYGVPVVVAINKFITDSEEEIKCIEEYCSKQGVKVSLTEVWEKGGEGGTDLANKVLDTLENEKSNFKYLYDEKLSIKEKMDIIAKEIYGADGVQYTPQANKQIKEIEKFNLDKLPICVAKTQYSLSDNPALLGRPTNFTINVKEVRVSNGAGFVVVQTGNIMTMPGLPKTPAANKMDIFEDGSIVGLF.

65–72 serves as a coordination point for ATP; the sequence is TPAGEGKS.

The protein belongs to the formate--tetrahydrofolate ligase family.

The enzyme catalyses (6S)-5,6,7,8-tetrahydrofolate + formate + ATP = (6R)-10-formyltetrahydrofolate + ADP + phosphate. It functions in the pathway one-carbon metabolism; tetrahydrofolate interconversion. The polypeptide is Formate--tetrahydrofolate ligase (Clostridium acetobutylicum (strain ATCC 824 / DSM 792 / JCM 1419 / IAM 19013 / LMG 5710 / NBRC 13948 / NRRL B-527 / VKM B-1787 / 2291 / W)).